The sequence spans 385 residues: Glucans biosynthesis protein C (385 aa).

Transmembrane regions (helical) follow at residues 17-37 (AWLM…SHTW), 60-80 (MQVF…RYPL), 91-111 (VGIP…IMLQ), 137-157 (ISHL…VWIF), 173-193 (KFSM…YAVI), 212-232 (FIVM…LAFI), 239-259 (LFTT…VAYL), 274-294 (TESV…FSFG), 311-331 (ASLF…AYIT), and 338-358 (WLGF…LYEI).

Belongs to the acyltransferase 3 family. OpgC subfamily.

The protein localises to the cell membrane. It participates in glycan metabolism; osmoregulated periplasmic glucan (OPG) biosynthesis. In terms of biological role, necessary for the succinyl substitution of periplasmic glucans. Could catalyze the transfer of succinyl residues from the cytoplasmic side of the membrane to the nascent glucan backbones on the periplasmic side of the membrane. The sequence is that of Glucans biosynthesis protein C from Escherichia coli O45:K1 (strain S88 / ExPEC).